A 344-amino-acid polypeptide reads, in one-letter code: Biotin synthase (344 aa).

A Radical SAM core domain is found at 65–290 (PEVEVEGIIS…RTMLRFAGGR (226 aa)). [4Fe-4S] cluster-binding residues include Cys80, Cys84, and Cys87. [2Fe-2S] cluster contacts are provided by Cys123, Cys156, Cys215, and Arg285.

This sequence belongs to the radical SAM superfamily. Biotin synthase family. In terms of assembly, homodimer. [4Fe-4S] cluster serves as cofactor. Requires [2Fe-2S] cluster as cofactor.

The enzyme catalyses (4R,5S)-dethiobiotin + (sulfur carrier)-SH + 2 reduced [2Fe-2S]-[ferredoxin] + 2 S-adenosyl-L-methionine = (sulfur carrier)-H + biotin + 2 5'-deoxyadenosine + 2 L-methionine + 2 oxidized [2Fe-2S]-[ferredoxin]. It participates in cofactor biosynthesis; biotin biosynthesis; biotin from 7,8-diaminononanoate: step 2/2. In terms of biological role, catalyzes the conversion of dethiobiotin (DTB) to biotin by the insertion of a sulfur atom into dethiobiotin via a radical-based mechanism. This chain is Biotin synthase, found in Mycolicibacterium paratuberculosis (strain ATCC BAA-968 / K-10) (Mycobacterium paratuberculosis).